The chain runs to 642 residues: MAVAVCGAVVPVVARLEGREFEYLMKKRSVTIGRNSSQGCVDVSMGHSSFISRRHLEIFIGGSGDGDDADVGDFYLRCLGKNGVFVDGVFQRRGAPPLQLPRVCTFRFPSTNIKITFTALAIDKKQKLEAPESPVKPVQPQISPLTIHIPDNIAHLISPLPSPTGTISAANSCPSSPRGAGSSGFKFGRVIPPDLIAEAAQSENDKDASGGDSPKDDSKPPYSYAQLIVQAITMAPDKQLTLNGIYTHITKNYPYYRTADKGWQNSIRHNLSLNRYFIKVPRSQEEPGKGSFWRIDPASESKLVEQAFRKRRPRGVPCFRTPLGPLSSRSAPASPNHSGVFSAHSSGVQTPESLSREGSPIPLEPDASVIHPKLAVIQEARFAQSAPGSPLSSQPVLITVQRQLPQTIKPVTYTVAAPVTTATSQQAVMQTVHVVHQIPAVSVTNVTGLTPINTYTVGGQTMVAQAAVMAQPKLEHQENGDHKEVKVKVEAIPAIGHPALTTASRIIQTSSSAPLQTVTIVQTPLGQHQLPIKAVTQNGTHVVPITTAIQGQVTTANSSYSLIESPWQWRGNGTRAASPLHMLATHASASASLPTKRQNGDQSEQPDIKRGKTDEREVLAMTGLDAQSEMAMAASNEQENQK.

Residues 30–91 (VTIGRNSSQG…NGVFVDGVFQ (62 aa)) enclose the FHA domain. The disordered stretch occupies residues 201–221 (QSENDKDASGGDSPKDDSKPP). Positions 203–219 (ENDKDASGGDSPKDDSK) are enriched in basic and acidic residues. Residues 219-314 (KPPYSYAQLI…EQAFRKRRPR (96 aa)) constitute a DNA-binding region (fork-head). The tract at residues 261 to 279 (KGWQNSIRHNLSLNRYFIK) is DNA-binding; major groove. 4 residues coordinate Mg(2+): Leu271, Ser272, Asn274, and Phe277. DNA-binding; minor groove regions lie at residues 289 to 293 (KGSFW) and 309 to 314 (RKRRPR). 2 disordered regions span residues 323–359 (LGPL…REGS) and 589–615 (ASAS…KTDE). Composition is skewed to polar residues over residues 327 to 353 (SSRS…TPES) and 589 to 605 (ASAS…QSEQ). Basic and acidic residues predominate over residues 606–615 (PDIKRGKTDE).

As to expression, in neurula embryos, expressed strongly in the future floor plate and weakly in the neural crest progenitor cells. As development progresses, expression becomes stronger in neural crest cells. At stage 24, expressed in the eye, brain, branchial arches and in the presomitic mesoderm in the posterior embryo. At stage 29, additionally expressed in the pronephric tubules. At stage 35, expressed in the migrating lateral muscle precursors of the abdomen. Additionally, the developing proctodeum and head structures including the branchial arches, eyes and otic vesicles continue to show expression. Expression also persists in the nephros.

The protein localises to the nucleus. It is found in the cytoplasm. Functionally, transcriptional regulator involved in different processes such as glucose metabolism, aerobic glycolysis and autophagy. Recognizes and binds the forkhead DNA sequence motif (5'-GTAAACA-3') and can both act as a transcription activator or repressor, depending on the context. Acts as a key regulator of metabolic reprogramming towards aerobic glycolysis, a process in which glucose is converted to lactate in the presence of oxygen. Acts as a negative regulator of autophagy in skeletal muscle: in response to starvation, enters the nucleus, binds the promoters of autophagy genes and represses their expression, preventing proteolysis of skeletal muscle proteins. The polypeptide is Forkhead box protein K2 (Xenopus laevis (African clawed frog)).